The chain runs to 199 residues: ATP-dependent Clp protease proteolytic subunit (199 aa).

Ser-97 serves as the catalytic Nucleophile. The active site involves His-122.

Belongs to the peptidase S14 family. In terms of assembly, fourteen ClpP subunits assemble into 2 heptameric rings which stack back to back to give a disk-like structure with a central cavity, resembling the structure of eukaryotic proteasomes.

The protein localises to the cytoplasm. The catalysed reaction is Hydrolysis of proteins to small peptides in the presence of ATP and magnesium. alpha-casein is the usual test substrate. In the absence of ATP, only oligopeptides shorter than five residues are hydrolyzed (such as succinyl-Leu-Tyr-|-NHMec, and Leu-Tyr-Leu-|-Tyr-Trp, in which cleavage of the -Tyr-|-Leu- and -Tyr-|-Trp bonds also occurs).. Its function is as follows. Cleaves peptides in various proteins in a process that requires ATP hydrolysis. Has a chymotrypsin-like activity. Plays a major role in the degradation of misfolded proteins. In Geobacter sulfurreducens (strain ATCC 51573 / DSM 12127 / PCA), this protein is ATP-dependent Clp protease proteolytic subunit.